A 158-amino-acid chain; its full sequence is Snaclec mucetin subunit alpha (158 aa).

The signal sequence occupies residues 1–23; the sequence is MGRFTFVSFGLLVVFLSLSGTGA. 3 disulfides stabilise this stretch: C27–C38, C55–C152, and C127–C144. In terms of domain architecture, C-type lectin spans 34–153; the sequence is YDRYCYQAFS…CGRENPFVCK (120 aa).

It belongs to the snaclec family. As to quaternary structure, dimer and tetramer of heterodimers of alpha and beta subunits ((alphabeta)(2) and (alphabeta)(4)); disulfide-linked. These two multimeric forms are found. The complex is glycosylated. As to expression, expressed by the venom gland.

It localises to the secreted. In terms of biological role, potent platelet activator that acts via GPIb (GP1BA/GP1BB). After activation by the toxin, the receptor is redistributed on platelet surface thanks to cytoskeletal translocation. The indirect activation of integrin alpha-IIb/beta-3 (ITGA2B/ITGB3) also induced by the toxin is downstream the cytoskeletal translocation of GPIb. The chain is Snaclec mucetin subunit alpha from Protobothrops mucrosquamatus (Taiwan habu).